Consider the following 362-residue polypeptide: 4-hydroxytryptamine kinase (362 aa).

ATP-binding positions include Asn37, Lys57, and 118-120 (QDV). Residue Asp224 is part of the active site. 249–251 (DWE) serves as a coordination point for ATP.

This sequence belongs to the methylthioribose kinase family. As to quaternary structure, monomer. Mg(2+) is required as a cofactor.

It catalyses the reaction 4-hydroxytryptamine + ATP = norbaeocystin + ADP + H(+). It carries out the reaction psilocin + ATP = psilocybin + ADP + H(+). The catalysed reaction is 4-hydroxy-N,N,N-trimethyltryptamine + ATP = aeruginascin + ADP + H(+). Its pathway is secondary metabolite biosynthesis. Functionally, 4-hydroxytryptamine kinase; part of the gene cluster that mediates the biosynthesis of psilocybin, a psychotropic tryptamine-derived natural product. The first step in the pathway is the decarboxylation of L-tryptophan to tryptamine by the decarboxylase psiD. 4-hydroxy-L-tryptophan is accepted as substrate by psiD as well. The cytochrome P450 monooxygenase psiH then converts tryptamine to 4-hydroxytryptamine. The kinase psiK catalyzes the 4-O-phosphorylation step by converting 4-hydroxytryptamine into norbaeocystin. The methyltransferase psiM then catalyzes iterative methyl transfer to the amino group of norbaeocystin to yield psilocybin via a monomethylated intermediate, baeocystin. 4-hydroxy-6-methyl-l-tryptophancan also be converted the decarboxylase PsiD, kinase PsiK, and methyltransferase PsiM into respectively 6-methyl-norbaeocystin, 6-methylbaeocystin, and 6-methylpsilocybin. PsiK kinase can also turn psilocin into psilocybin. This activity may represent a protective mechanism to rephosphorylate the unstable psilocin to the stable psilocybin in case of intracellular ester cleavage. Moreover, psiK is able to O-phosphorylate the quaternary amine 4-hydroxy-N,N,N-trimethyltryptamine (4-OH-TMT) to yield aeruginascin, another bioactive compound found in Psilocybe species. The protein is 4-hydroxytryptamine kinase of Psilocybe cubensis (Psychedelic mushroom).